Reading from the N-terminus, the 55-residue chain is Cytochrome c oxidase subunit 7s (55 aa).

A helical transmembrane segment spans residues 13–35 (LVQDIGVALILGSIAGCFFKYGV).

In terms of assembly, slime mold cytochrome c oxidase consists of at least seven different polypeptides species, subunits I, II, III, IV, V, VI, and VIIe/s in order of MW.

The protein localises to the mitochondrion inner membrane. The catalysed reaction is 4 Fe(II)-[cytochrome c] + O2 + 8 H(+)(in) = 4 Fe(III)-[cytochrome c] + 2 H2O + 4 H(+)(out). Functionally, this protein is one of the nuclear-coded polypeptide chains of cytochrome c oxidase, the terminal oxidase in mitochondrial electron transport. In Dictyostelium discoideum (Social amoeba), this protein is Cytochrome c oxidase subunit 7s (cxgS).